A 464-amino-acid chain; its full sequence is tRNA modification GTPase MnmE (464 aa).

Positions 27, 90, and 129 each coordinate (6S)-5-formyl-5,6,7,8-tetrahydrofolate. The TrmE-type G domain maps to 222–384 (GVTLVLAGSV…LYDKIKTLIS (163 aa)). GTP-binding positions include 232 to 237 (NAGKSS), 251 to 257 (SSYPGTT), and 276 to 279 (DTAG). Mg(2+)-binding residues include serine 236 and threonine 257. (6S)-5-formyl-5,6,7,8-tetrahydrofolate is bound at residue lysine 464.

It belongs to the TRAFAC class TrmE-Era-EngA-EngB-Septin-like GTPase superfamily. TrmE GTPase family. As to quaternary structure, homodimer. Heterotetramer of two MnmE and two MnmG subunits. The cofactor is K(+).

The protein resides in the cytoplasm. Exhibits a very high intrinsic GTPase hydrolysis rate. Involved in the addition of a carboxymethylaminomethyl (cmnm) group at the wobble position (U34) of certain tRNAs, forming tRNA-cmnm(5)s(2)U34. The protein is tRNA modification GTPase MnmE of Borrelia garinii subsp. bavariensis (strain ATCC BAA-2496 / DSM 23469 / PBi) (Borreliella bavariensis).